The chain runs to 208 residues: Heavy metal-associated isoprenylated plant protein 42 (208 aa).

The region spanning 6 to 70 is the HMA domain; the sequence is FPICILKMNL…AVAKLGQSPQ (65 aa). Residues 93-116 are disordered; sequence ATNKTQDKPSPPAPPVTATTPVET. Cysteine 205 bears the Cysteine methyl ester mark. Cysteine 205 carries S-farnesyl cysteine lipidation. Positions 206 to 208 are cleaved as a propeptide — removed in mature form; that stretch reads SIM.

It belongs to the HIPP family.

Its function is as follows. Probable heavy-metal-binding protein. The chain is Heavy metal-associated isoprenylated plant protein 42 from Arabidopsis thaliana (Mouse-ear cress).